A 181-amino-acid polypeptide reads, in one-letter code: Peptide deformylase (181 aa).

2 residues coordinate Fe cation: Cys103 and His145. Residue Glu146 is part of the active site. His149 contributes to the Fe cation binding site.

This sequence belongs to the polypeptide deformylase family. Fe(2+) serves as cofactor.

It catalyses the reaction N-terminal N-formyl-L-methionyl-[peptide] + H2O = N-terminal L-methionyl-[peptide] + formate. In terms of biological role, removes the formyl group from the N-terminal Met of newly synthesized proteins. Requires at least a dipeptide for an efficient rate of reaction. N-terminal L-methionine is a prerequisite for activity but the enzyme has broad specificity at other positions. The polypeptide is Peptide deformylase (Orientia tsutsugamushi (strain Ikeda) (Rickettsia tsutsugamushi)).